Here is a 171-residue protein sequence, read N- to C-terminus: Protein TIFY 11d (171 aa).

Residues 65–100 (PSAGTAPLTIFYDGRMVVVDDVPVEKAAELMRLAGS) form the Tify domain. Residues 117–142 (PIARKASLQRFLQKRKHRITTTSEPY) carry the Jas motif. The Nuclear localization signal motif lies at 119 to 126 (ARKASLQR).

This sequence belongs to the TIFY/JAZ family. As to quaternary structure, interacts with BHLH148 and COI1A. Interacts with COI1A, COI1B and COI2 in a coronatine-dependent manner. Coronatine is an analog of jasmonoyl isoleucine (JA-Ile). Ubiquitinated. Increase in jasmonoyl isoleucine (JA-Ile) levels mediates its degradation via COI1A-mediated proteasome pathway.

It is found in the nucleus. Its function is as follows. Repressor of jasmonate (JA) responses. May act on an initial response of JA-regulated gene expression toward drought tolerance as part of a BHLH148-TIFY11D/JAZ12-COI1A complex. This Oryza sativa subsp. japonica (Rice) protein is Protein TIFY 11d.